The following is a 462-amino-acid chain: Phosphoglycerate kinase, chloroplastic (462 aa).

The transit peptide at 1 to 61 (MALSMKMRAN…AGRSRIVVEA (61 aa)) directs the protein to the chloroplast. 11 residues coordinate (2R)-3-phosphoglycerate: Ala83, Asp84, Asn86, Arg101, Ser123, His124, Gly126, Arg127, Arg183, His215, and Arg216. Gly261 is a binding site for ADP. Position 261 (Gly261) interacts with CDP. Positions 263 and 267 each coordinate AMP. An ATP-binding site is contributed by Lys267. ADP is bound at residue Gly285. Gly285 is a binding site for CDP. AMP contacts are provided by Gly286 and Gly358. Positions 286 and 358 each coordinate ATP. Gly383 and Phe388 together coordinate CDP. Phe388 contacts ADP. Glu389 contributes to the AMP binding site. The ATP site is built by Glu389, Asp420, and Ser421. Mg(2+) is bound at residue Asp420.

This sequence belongs to the phosphoglycerate kinase family. As to quaternary structure, monomer. Mg(2+) serves as cofactor.

The protein resides in the plastid. It is found in the chloroplast. It carries out the reaction (2R)-3-phosphoglycerate + ATP = (2R)-3-phospho-glyceroyl phosphate + ADP. The protein operates within carbohydrate biosynthesis; Calvin cycle. The sequence is that of Phosphoglycerate kinase, chloroplastic (PGK) from Volvox carteri (Green alga).